The chain runs to 505 residues: Peroxisome proliferator-activated receptor gamma (505 aa).

O-linked (GlcNAc) threonine glycosylation occurs at T84. Position 112 is a phosphoserine; by MAPK (S112). Residues 136–210 (AIECRVCGDK…VGMSHNAIRF (75 aa)) constitute a DNA-binding region (nuclear receptor). 2 NR C4-type zinc fingers span residues 139–159 (CRVC…CEGC) and 176–198 (CDLN…FQKC). The interval 205-280 (HNAIRFGRMP…DKSPFVIYDM (76 aa)) is interaction with FAM120B. One can recognise an NR LBD domain in the interval 238-503 (DLRALAKHLY…HPLLQEIYKD (266 aa)). A Glycyl lysine isopeptide (Lys-Gly) (interchain with G-Cter in ubiquitin) cross-link involves residue K252. The 9aaTAD signature appears at 495–503 (PLLQEIYKD).

The protein belongs to the nuclear hormone receptor family. NR1 subfamily. As to quaternary structure, heterodimer with other nuclear receptors, such as RXRA. The heterodimer with the retinoic acid receptor RXRA is called adipocyte-specific transcription factor ARF6. Interacts with NCOA6 coactivator, leading to a strong increase in transcription of target genes. Interacts with coactivator PPARBP, leading to a mild increase in transcription of target genes. Interacts with NOCA7 in a ligand-inducible manner. Interacts with NCOA1 and NCOA2 LXXLL motifs. Interacts with ASXL1, ASXL2, DNTTIP2, FAM120B, MAP2K1/MEK1, NR0B2, PDPK1, PRDM16, PRMT2 and TGFB1I1. Interacts (when activated by agonist) with PPP5C. Interacts with HELZ2 and THRAP3; the interaction stimulates the transcriptional activity of PPARG. Interacts with PER2, the interaction is ligand dependent and blocks PPARG recruitment to target promoters. Interacts with NOCT. Interacts with FOXO1 (acetylated form). Interacts with ACTN4. Interacts (when in the liganded conformation) with GPS2. Interacts with CRY1 and CRY2 in a ligand-dependent manner. In the absence of hormonal ligand, interacts with TACC1. In macrophages, interacts with PAQR3 and STUB1; the interactions promote PPARG poylubiquitination and STUB1-mediated degradation. Post-translationally, O-GlcNAcylation at Thr-84 reduces transcriptional activity in adipocytes. Phosphorylated in basal conditions and dephosphorylated when treated with the ligand. May be dephosphorylated by PPP5C. The phosphorylated Ser-112 form is recognized by PER2 and repressed, dephosphorylation at Ser-112 induces adipogenic activity. Ser-112 phosphorylation levels are reduced by 65% in brown adipose tissue compared to white adipose tissue. In terms of processing, ubiquitinated by E3 ubiquitin-protein ligase complex containing FBXO9; leading to proteasomal degradation. Post-translationally, ubiquitinated by E3 ubiquitin-protein ligase complex containing FBXO9; leading to proteasomal degradation. Ubiquitinated at Lys-252 by TRIM55 leading to proteasomal degradation. Ubiquitinated by E3 ubiquitin-protein ligase STUB1/CHIP; leading to proteasomal degradation. As to expression, highest expression in white and brown adipose tissue. Also found in liver, skeletal muscle, heart, adrenal gland, spleen, kidney and intestine. Isoform 2 is more abundant than isoform 1 in adipose tissue.

It is found in the nucleus. It localises to the cytoplasm. Its activity is regulated as follows. PDPK1 activates its transcriptional activity independently of its kinase activity. In terms of biological role, nuclear receptor that binds peroxisome proliferators such as hypolipidemic drugs and fatty acids. Once activated by a ligand, the nuclear receptor binds to DNA specific PPAR response elements (PPRE) and modulates the transcription of its target genes, such as acyl-CoA oxidase. It therefore controls the peroxisomal beta-oxidation pathway of fatty acids. Key regulator of adipocyte differentiation and glucose homeostasis. ARF6 acts as a key regulator of the tissue-specific adipocyte P2 (aP2) enhancer. Acts as a critical regulator of gut homeostasis by suppressing NF-kappa-B-mediated pro-inflammatory responses. Plays a role in the regulation of cardiovascular circadian rhythms by regulating the transcription of BMAL1 in the blood vessels. The protein is Peroxisome proliferator-activated receptor gamma (Pparg) of Mus musculus (Mouse).